A 445-amino-acid polypeptide reads, in one-letter code: Argininosuccinate synthase (445 aa).

Residues 17–25 and alanine 43 contribute to the ATP site; that span reads AFSGGLDTS. Residue tyrosine 99 coordinates L-citrulline. ATP-binding residues include glycine 129 and threonine 131. L-aspartate is bound by residues threonine 131, asparagine 135, and aspartate 136. Asparagine 135 contacts L-citrulline. Position 136 (aspartate 136) interacts with ATP. L-citrulline-binding residues include arginine 139 and serine 192. Aspartate 194 serves as a coordination point for ATP. Residues threonine 201, glutamate 203, and glutamate 280 each coordinate L-citrulline.

Belongs to the argininosuccinate synthase family. Type 2 subfamily. In terms of assembly, homotetramer.

It localises to the cytoplasm. It carries out the reaction L-citrulline + L-aspartate + ATP = 2-(N(omega)-L-arginino)succinate + AMP + diphosphate + H(+). It functions in the pathway amino-acid biosynthesis; L-arginine biosynthesis; L-arginine from L-ornithine and carbamoyl phosphate: step 2/3. The sequence is that of Argininosuccinate synthase from Polaromonas naphthalenivorans (strain CJ2).